Consider the following 256-residue polypeptide: Imidazole glycerol phosphate synthase subunit HisF (256 aa).

Catalysis depends on residues Asp-11 and Asp-130.

This sequence belongs to the HisA/HisF family. In terms of assembly, heterodimer of HisH and HisF.

It localises to the cytoplasm. It catalyses the reaction 5-[(5-phospho-1-deoxy-D-ribulos-1-ylimino)methylamino]-1-(5-phospho-beta-D-ribosyl)imidazole-4-carboxamide + L-glutamine = D-erythro-1-(imidazol-4-yl)glycerol 3-phosphate + 5-amino-1-(5-phospho-beta-D-ribosyl)imidazole-4-carboxamide + L-glutamate + H(+). The protein operates within amino-acid biosynthesis; L-histidine biosynthesis; L-histidine from 5-phospho-alpha-D-ribose 1-diphosphate: step 5/9. Functionally, IGPS catalyzes the conversion of PRFAR and glutamine to IGP, AICAR and glutamate. The HisF subunit catalyzes the cyclization activity that produces IGP and AICAR from PRFAR using the ammonia provided by the HisH subunit. The protein is Imidazole glycerol phosphate synthase subunit HisF of Thioalkalivibrio sulfidiphilus (strain HL-EbGR7).